Reading from the N-terminus, the 327-residue chain is Methionyl-tRNA formyltransferase (327 aa).

113 to 116 (SILP) contacts (6S)-5,6,7,8-tetrahydrofolate.

Belongs to the Fmt family.

The enzyme catalyses L-methionyl-tRNA(fMet) + (6R)-10-formyltetrahydrofolate = N-formyl-L-methionyl-tRNA(fMet) + (6S)-5,6,7,8-tetrahydrofolate + H(+). Its function is as follows. Attaches a formyl group to the free amino group of methionyl-tRNA(fMet). The formyl group appears to play a dual role in the initiator identity of N-formylmethionyl-tRNA by promoting its recognition by IF2 and preventing the misappropriation of this tRNA by the elongation apparatus. In Colwellia psychrerythraea (strain 34H / ATCC BAA-681) (Vibrio psychroerythus), this protein is Methionyl-tRNA formyltransferase.